Consider the following 562-residue polypeptide: uncharacterized protein (562 aa).

This is an uncharacterized protein from Saccharolobus islandicus (Sulfolobus islandicus).